We begin with the raw amino-acid sequence, 310 residues long: Aspartate carbamoyltransferase catalytic subunit (310 aa).

Positions 58 and 59 each coordinate carbamoyl phosphate. K86 contributes to the L-aspartate binding site. Residues R108, H137, and Q140 each contribute to the carbamoyl phosphate site. R170 and R225 together coordinate L-aspartate. Residues G264 and P265 each coordinate carbamoyl phosphate.

The protein belongs to the aspartate/ornithine carbamoyltransferase superfamily. ATCase family. In terms of assembly, heterododecamer (2C3:3R2) of six catalytic PyrB chains organized as two trimers (C3), and six regulatory PyrI chains organized as three dimers (R2).

The enzyme catalyses carbamoyl phosphate + L-aspartate = N-carbamoyl-L-aspartate + phosphate + H(+). It participates in pyrimidine metabolism; UMP biosynthesis via de novo pathway; (S)-dihydroorotate from bicarbonate: step 2/3. Functionally, catalyzes the condensation of carbamoyl phosphate and aspartate to form carbamoyl aspartate and inorganic phosphate, the committed step in the de novo pyrimidine nucleotide biosynthesis pathway. The protein is Aspartate carbamoyltransferase catalytic subunit of Coxiella burnetii (strain CbuG_Q212) (Coxiella burnetii (strain Q212)).